Consider the following 71-residue polypeptide: Antitoxin ParD2 (71 aa).

Its function is as follows. Antitoxin component of a type II toxin-antitoxin (TA) system. The chain is Antitoxin ParD2 (parD2) from Mycobacterium tuberculosis (strain CDC 1551 / Oshkosh).